The chain runs to 103 residues: MKRILTLTVAALALGTPALAYDGTNCKAPGNCWEPKPDYPAKVEGSKYDPQHDPAELSKQGESLAVMDARNEWRVWNMKKTGKFEYDVKKIDGYDETKAPPAE.

A signal peptide spans 1 to 20 (MKRILTLTVAALALGTPALA). Cysteines 26 and 32 form a disulfide.

This sequence belongs to the methanol dehydrogenase subunit 2 family. As to quaternary structure, heterotetramer composed of 2 alpha and 2 beta subunits.

Its subcellular location is the periplasm. It carries out the reaction 2 Fe(III)-[cytochrome cL] + a primary alcohol = 2 Fe(II)-[cytochrome cL] + an aldehyde + 2 H(+). In terms of biological role, catalyzes the oxidation of primary alcohols including methanol. The protein is Methanol dehydrogenase [cytochrome c] subunit 2 (moxI) of Paracoccus denitrificans.